Here is a 234-residue protein sequence, read N- to C-terminus: Serum amyloid P-component (234 aa).

A signal peptide spans 1-22 (MDKLLSLLGVSILAGLLLEAFA). The Pentraxin (PTX) domain occupies 27–226 (TGKVFVFPRQ…YAVIRPRCVA (200 aa)). Asparagine 54 is a glycosylation site (N-linked (GlcNAc...) asparagine). An intrachain disulfide couples cysteine 58 to cysteine 117. Ca(2+)-binding residues include asparagine 81, glutamate 158, glutamine 159, aspartate 160, and glutamine 170.

This sequence belongs to the pentraxin family. In terms of assembly, homopentamer. Pentraxin (or pentaxin) have a discoid arrangement of 5 non-covalently bound subunits. Ca(2+) is required as a cofactor.

It is found in the secreted. In Mesocricetus auratus (Golden hamster), this protein is Serum amyloid P-component (APCS).